A 464-amino-acid chain; its full sequence is tRNA modification GTPase MnmE (464 aa).

Residues Arg29, Glu91, and Arg131 each contribute to the (6S)-5-formyl-5,6,7,8-tetrahydrofolate site. Residues Gly226–Gly387 form the TrmE-type G domain. Asn236 lines the K(+) pocket. GTP is bound by residues Asn236–Ser241, Thr255–Thr261, and Asp280–Gly283. Residue Ser240 participates in Mg(2+) binding. K(+) contacts are provided by Thr255, Leu257, and Thr260. Position 261 (Thr261) interacts with Mg(2+). Lys464 serves as a coordination point for (6S)-5-formyl-5,6,7,8-tetrahydrofolate.

Belongs to the TRAFAC class TrmE-Era-EngA-EngB-Septin-like GTPase superfamily. TrmE GTPase family. In terms of assembly, homodimer. Heterotetramer of two MnmE and two MnmG subunits. It depends on K(+) as a cofactor.

Its subcellular location is the cytoplasm. Its function is as follows. Exhibits a very high intrinsic GTPase hydrolysis rate. Involved in the addition of a carboxymethylaminomethyl (cmnm) group at the wobble position (U34) of certain tRNAs, forming tRNA-cmnm(5)s(2)U34. The chain is tRNA modification GTPase MnmE from Prochlorococcus marinus (strain NATL1A).